Consider the following 464-residue polypeptide: ATP-dependent protease ATPase subunit HslU (464 aa).

ATP contacts are provided by residues V19, 61–66 (GVGKTE), D278, E342, and R414.

Belongs to the ClpX chaperone family. HslU subfamily. As to quaternary structure, a double ring-shaped homohexamer of HslV is capped on each side by a ring-shaped HslU homohexamer. The assembly of the HslU/HslV complex is dependent on binding of ATP.

It localises to the cytoplasm. Its function is as follows. ATPase subunit of a proteasome-like degradation complex; this subunit has chaperone activity. The binding of ATP and its subsequent hydrolysis by HslU are essential for unfolding of protein substrates subsequently hydrolyzed by HslV. HslU recognizes the N-terminal part of its protein substrates and unfolds these before they are guided to HslV for hydrolysis. This is ATP-dependent protease ATPase subunit HslU from Halalkalibacterium halodurans (strain ATCC BAA-125 / DSM 18197 / FERM 7344 / JCM 9153 / C-125) (Bacillus halodurans).